Consider the following 329-residue polypeptide: MWGLKVLLLPVMSFALYPEEILDTHWELWKKTHRKQYNSKVDEISRRLIWEKNLKYISIHNLEASLGVHTYELAMNHLGDMTNEEVVQKMTGLKVPASHSRSNDTLYIPDWEGRAPDSVDYRKKGYVTPVKNQGQCGSCWAFSSVGALEGQLKKKTGKLLNLSPQNLVDCVSENDGCGGGYMTNAFQYVQKNRGIDSEDAYPYVGQEESCMYNPTGKAAKCRGYREIPEGNEKALKRAVARVGPVSVAIDASLTSFQFYSKGVYYDESCNSDNLNHAVLAVGYGIQKGNKHWIIKNSWGENWGNKGYILMARNKNNACGIANLASFPKM.

Positions 1–15 (MWGLKVLLLPVMSFA) are cleaved as a signal peptide. Residues 16–114 (LYPEEILDTH…TLYIPDWEGR (99 aa)) constitute a propeptide, activation peptide. The N-linked (GlcNAc...) asparagine glycan is linked to asparagine 103. 3 cysteine pairs are disulfide-bonded: cysteine 136-cysteine 177, cysteine 170-cysteine 210, and cysteine 269-cysteine 318. Residue cysteine 139 is part of the active site. Catalysis depends on residues histidine 276 and asparagine 296.

It belongs to the peptidase C1 family.

Its subcellular location is the lysosome. The protein resides in the secreted. It is found in the apical cell membrane. The enzyme catalyses Broad proteolytic activity. With small-molecule substrates and inhibitors, the major determinant of specificity is P2, which is preferably Leu, Met &gt; Phe, and not Arg.. In terms of biological role, thiol protease involved in osteoclastic bone resorption and may participate partially in the disorder of bone remodeling. Displays potent endoprotease activity against fibrinogen at acid pH. May play an important role in extracellular matrix degradation. Involved in the release of thyroid hormone thyroxine (T4) by limited proteolysis of TG/thyroglobulin in the thyroid follicle lumen. This chain is Cathepsin K (CTSK), found in Macaca fascicularis (Crab-eating macaque).